The chain runs to 164 residues: MVGVVSDDQDFLDSKDTMKMAVVLVTPLGNGDLALKFGYPTPHGGCQKMDTTFTEGAVPGQFSNPAMALSDIRVAFSDYQHFALLYLEMRKGGLRNQWLQLYGGRAAGRRPRHPRFGSGMSPLCLHQPFLHAEGGTAGSWCLWPRVPAPPCPSLPLFAPPAPSL.

It belongs to the calycin superfamily. Lipocalin family.

The chain is Lipocalin-like 1 protein (LCNL1) from Homo sapiens (Human).